Consider the following 384-residue polypeptide: Cytochrome b (384 aa).

The next 4 membrane-spanning stretches (helical) occupy residues 32 to 52 (FGSL…FLSM), 75 to 96 (FLLR…YFHI), 111 to 131 (WRVG…GYVL), and 176 to 196 (FFSL…VHLI). Heme b-binding residues include H81 and H95. 2 residues coordinate heme b: H180 and H194. An a ubiquinone-binding site is contributed by H199. 4 consecutive transmembrane segments (helical) span residues 224 to 244 (SKDW…VYLM), 286 to 306 (FGGV…PLLH), 318 to 338 (FGRM…WIGS), and 345 to 366 (FIII…LIPL).

It belongs to the cytochrome b family. As to quaternary structure, the main subunits of complex b-c1 are: cytochrome b, cytochrome c1 and the Rieske protein. Heme b serves as cofactor.

Its subcellular location is the mitochondrion inner membrane. In terms of biological role, component of the ubiquinol-cytochrome c reductase complex (complex III or cytochrome b-c1 complex) that is part of the mitochondrial respiratory chain. The b-c1 complex mediates electron transfer from ubiquinol to cytochrome c. Contributes to the generation of a proton gradient across the mitochondrial membrane that is then used for ATP synthesis. The polypeptide is Cytochrome b (MT-CYB) (Acropora tenuis (Purple tipped acropora)).